The following is a 205-amino-acid chain: Recombination protein RecR (205 aa).

The segment at 58 to 75 (CSECQNVTDRDSDPCVLC) adopts a C4-type zinc-finger fold. In terms of domain architecture, Toprim spans 83-182 (TVICVVESPV…AVSKIARGIP (100 aa)).

Belongs to the RecR family.

Functionally, may play a role in DNA repair. It seems to be involved in an RecBC-independent recombinational process of DNA repair. It may act with RecF and RecO. This Chlorobium phaeobacteroides (strain DSM 266 / SMG 266 / 2430) protein is Recombination protein RecR.